We begin with the raw amino-acid sequence, 140 residues long: Endoribonuclease YbeY (140 aa).

Residues His99, His103, and His109 each coordinate Zn(2+).

Belongs to the endoribonuclease YbeY family. Requires Zn(2+) as cofactor.

Its subcellular location is the cytoplasm. In terms of biological role, single strand-specific metallo-endoribonuclease involved in late-stage 70S ribosome quality control and in maturation of the 3' terminus of the 16S rRNA. This Wolinella succinogenes (strain ATCC 29543 / DSM 1740 / CCUG 13145 / JCM 31913 / LMG 7466 / NCTC 11488 / FDC 602W) (Vibrio succinogenes) protein is Endoribonuclease YbeY.